Here is a 335-residue protein sequence, read N- to C-terminus: 2-keto-3-deoxygluconate permease (335 aa).

The next 10 membrane-spanning stretches (helical) occupy residues 10 to 30, 42 to 62, 77 to 97, 100 to 120, 141 to 161, 163 to 183, 200 to 220, 224 to 244, 254 to 274, and 289 to 309; these read IPGG…TAAP, GIIT…GASI, LVLT…QLLP, GIEV…AMDM, AFVL…LGSA, LASF…IGFA, QTLI…GVIL, LLGI…LIIA, TAGL…VIIA, and ALVA…TAMY.

The protein belongs to the KdgT transporter family.

The protein resides in the cell inner membrane. It carries out the reaction 2-dehydro-3-deoxy-D-gluconate(in) + H(+)(in) = 2-dehydro-3-deoxy-D-gluconate(out) + H(+)(out). Functionally, catalyzes the proton-dependent uptake of 2-keto-3-deoxygluconate (KDG) into the cell. This Tolumonas auensis (strain DSM 9187 / NBRC 110442 / TA 4) protein is 2-keto-3-deoxygluconate permease.